The following is a 730-amino-acid chain: Dynein axonemal intermediate chain 7 (730 aa).

Over residues 1 to 14 (MAPKSKKAPSKKKM) the composition is skewed to basic residues. The segment at 1-20 (MAPKSKKAPSKKKMTKAERL) is disordered.

This sequence belongs to the DNAI7 family. Part of the multisubunit axonemal dynein complex formed at least of two heavy chains and a number of intermediate and light chains. Interacts with tubulin. Associates with microtubule. In terms of processing, ubiquitinated. Ubiquitination leads to its degradation through the 26S proteasome. Ubiquitin-proteasome-mediated DNAI7 degradation occurs in mitosis. As to expression, high expressed in lung, kidney, and testis.

It localises to the cell projection. It is found in the cilium. Its subcellular location is the cytoplasm. Functionally, via its association with the multisubunit axonemal dynein complex, is potentially involved in the regulation of cilia function. May also act as a cell cycle regulator. In Mus musculus (Mouse), this protein is Dynein axonemal intermediate chain 7 (Dnai7).